The following is a 356-amino-acid chain: Methionine import ATP-binding protein MetN (356 aa).

One can recognise an ABC transporter domain in the interval 7-250 (IKLDNIDVTF…PRESLTQDFI (244 aa)). Residue 43 to 50 (GYSGAGKS) participates in ATP binding.

It belongs to the ABC transporter superfamily. Methionine importer (TC 3.A.1.24) family. In terms of assembly, the complex is composed of two ATP-binding proteins (MetN), two transmembrane proteins (MetI) and a solute-binding protein (MetQ).

It localises to the cell membrane. The catalysed reaction is L-methionine(out) + ATP + H2O = L-methionine(in) + ADP + phosphate + H(+). It catalyses the reaction D-methionine(out) + ATP + H2O = D-methionine(in) + ADP + phosphate + H(+). In terms of biological role, part of the ABC transporter complex MetNIQ involved in methionine import. Responsible for energy coupling to the transport system. The chain is Methionine import ATP-binding protein MetN from Streptococcus agalactiae serotype III (strain NEM316).